The sequence spans 383 residues: Mannan endo-1,4-beta-mannosidase A (383 aa).

The N-terminal stretch at M1–A18 is a signal peptide. N75 is a glycosylation site (N-linked (GlcNAc...) asparagine). Substrate is bound at residue W97. N-linked (GlcNAc...) asparagine glycosylation is present at N199. Substrate contacts are provided by residues N210 and E211 to R213. The Proton donor/acceptor role is filled by E211. Cysteines 214 and 217 form a disulfide. 2 residues coordinate substrate: Y279 and W283. Cysteines 301 and 308 form a disulfide. E312 functions as the Nucleophile in the catalytic mechanism. A disulfide bond links C320 and C369. An N-linked (GlcNAc...) asparagine glycan is attached at N332. W342 lines the substrate pocket.

The protein belongs to the glycosyl hydrolase 5 (cellulase A) family. Monomer.

The protein resides in the secreted. It carries out the reaction Random hydrolysis of (1-&gt;4)-beta-D-mannosidic linkages in mannans, galactomannans and glucomannans.. In terms of biological role, endo-1,4-mannanase that catalyzes the random hydrolysis of (1-&gt;4)-beta-D-mannosidic linkages in mannans and heteromannans. It is a crucial enzyme for depolymerization of seed galactomannans and wood galactoglucomannans. Active against locust bean gum and gum guar. Also has transglycosylation activity. This chain is Mannan endo-1,4-beta-mannosidase A (manA), found in Emericella nidulans (strain FGSC A4 / ATCC 38163 / CBS 112.46 / NRRL 194 / M139) (Aspergillus nidulans).